The sequence spans 2293 residues: Protein Ycf2 (2293 aa).

Residue 1642-1649 participates in ATP binding; the sequence is GSIGTGRS.

Belongs to the Ycf2 family.

The protein resides in the plastid. Its subcellular location is the chloroplast stroma. Probable ATPase of unknown function. Its presence in a non-photosynthetic plant (Epifagus virginiana) and experiments in tobacco indicate that it has an essential function which is probably not related to photosynthesis. This Platanus occidentalis (Sycamore) protein is Protein Ycf2.